Here is a 363-residue protein sequence, read N- to C-terminus: MVYTTPQQQQRFSSTPQSSHTLIFSPIRAPSMQTPSSLDYQSPSIVVSSSSMKVHGRSSSFGKFSLSIGQNGKATILGPINVLPTDTSKMEKPVPKKKPVTSDRVEKTRILSLLKKMRNKSSTVNKKYSKVPLKSTTSLQPAATAPSPLVSNIIKPSPKKLASPRTPNANSNLNLNFTSFQIKTGFTPNLDGILLENFTSPNTTADSQGNSASNIINNNHGSANNTNQFLFNLPLQSSPRQFRSPARLIDPLPISDWNTSLLMSPPRTTNFESANNHFNSNFAQASMLRRPSLPHIDEVIPQDSNPANYSDRSDYLSVDQNANNHNGALSEQTYNNIMKSSMISLPIEKDDATMALRKLVSRE.

Residues 1–20 are disordered; it reads MVYTTPQQQQRFSSTPQSSH. A phosphoserine mark is found at Ser157 and Ser292.

In terms of assembly, interacts with transcription complexes SCB-binding factor (SBF) and MCB-binding factor (MBF). Interacts with SWI4.

The polypeptide is Putative transcriptional activator MSA2 (MSA2) (Saccharomyces cerevisiae (strain ATCC 204508 / S288c) (Baker's yeast)).